A 368-amino-acid polypeptide reads, in one-letter code: Peptide chain release factor 2 (368 aa).

Gln249 is modified (N5-methylglutamine).

This sequence belongs to the prokaryotic/mitochondrial release factor family. In terms of processing, methylated by PrmC. Methylation increases the termination efficiency of RF2.

Its subcellular location is the cytoplasm. Peptide chain release factor 2 directs the termination of translation in response to the peptide chain termination codons UGA and UAA. This chain is Peptide chain release factor 2, found in Rhodococcus jostii (strain RHA1).